Reading from the N-terminus, the 103-residue chain is Acylphosphatase-2 (103 aa).

Ser2 is subject to N-acetylserine. Positions 13 to 103 constitute an Acylphosphatase-like domain; it reads SVDYEVFGRV…LDFSGFSTRY (91 aa). Residues Arg28 and Asn46 contribute to the active site.

Belongs to the acylphosphatase family.

The enzyme catalyses an acyl phosphate + H2O = a carboxylate + phosphate + H(+). In terms of biological role, its physiological role is not yet clear. The protein is Acylphosphatase-2 (ACYP2) of Gallus gallus (Chicken).